The following is a 954-amino-acid chain: MRIRGVKPFASAVGLLLGLLYAVDAAKVNKHKPWIETTYHGIVTENDDKVLLDPPLIALDKDAPLRYAGEICGFRIHGQNVPFEAVVLDKSTGEGVIRAKDKLDCELQKEHTFTIQAYDCGEGPDGGNMKKSHKATVHIQVNDVNEYSPVFKEKSYKATVIEGKKYDSIMKVEAVDADCSFQFSQICSYEIVTPDVPFTIDKDGNIKNTEKLNYGKERMYKLTVTAYDCGKNRASEDVLVKINIKPTCKPSWQGFNKRIEYEPGTGSLALFPSMHLETCEEPITSIQASIMLETNHIGKGCDRDTYSEKSLHKLCGASSGTVELLPAPSNSANWTVGLPTDNGHDSDQVFEFNGTQAIKVPEGVVSTTLKEPFTISVWMRHGPGGREKETILCNSDKTEMNRHHYSLYVHNCRLVLLLRQEPTESESYKPAEFHWKLDQVCDKEWHHYVLNIEFPAVTLFVDGGTFEPFLVTEDYPLHTSKIETQLTIGACWQGGSARMTQFFRGNLAGLMIRSGKLENKKVIDCLYTCKEGLDVQLPEEVASAVKVEFNPNQSSLSLEGDDIESFEKVMQHISYLNSRQFPTPGIRHLRVSTTVKCFNEETCISVPDSEGYVMVLQPEEPKISLSGIDHFARGAAEFESVEGVTLFPELRIVSTITREVEVEAEAETEAEGEDDPTVQETVVSEEIMHNLDTCEVTVVGEDLNGDHESLEVDLAQIQQRALEMSSSNVGMVITGVNTMANYEQVLHLIRYRNWHTEALFDRKFKLVCSELNGRYISNEFKVEVNVIHTANPMDHANNAMVQPQFISQVQHASVDLSGHNLVNTHQASVVPSAATIVIVVCVSFLVFMIILGVFRIRAAHQRTMRDQENGKENEMDWDDSALTITVNPMETYEDQHSSEEEGDEEEEESEDGEEEDDITSAESDSSEDEAGEQEDQQGSSRQQQLEWDDSTLTY.

An N-terminal signal peptide occupies residues 1–25 (MRIRGVKPFASAVGLLLGLLYAVDA). At 26–833 (AKVNKHKPWI…THQASVVPSA (808 aa)) the chain is on the extracellular side. Cadherin domains follow at residues 35-151 (IETT…SPVF) and 152-252 (KEKS…KPSW). 3 N-linked (GlcNAc...) asparagine glycosylation sites follow: asparagine 333, asparagine 353, and asparagine 552. A helical membrane pass occupies residues 834–854 (ATIVIVVCVSFLVFMIILGVF). The Cytoplasmic portion of the chain corresponds to 855–954 (RIRAAHQRTM…LEWDDSTLTY (100 aa)). Residues 891-954 (TYEDQHSSEE…LEWDDSTLTY (64 aa)) form a disordered region. Positions 900 to 935 (EEGDEEEEESEDGEEEDDITSAESDSSEDEAGEQED) are enriched in acidic residues.

It belongs to the calsyntenin family. In terms of assembly, homooligomer and heterooligomer; mediates both homophilic and heterophilc interactions with clstn2 and clstn3 paralogs via cadherin domains. In terms of tissue distribution, by 48 hours post-fertilization (hpf), widely expressed in the brain, with strong expression in the telencephalon and the midbrain.

Its subcellular location is the postsynaptic cell membrane. It localises to the endoplasmic reticulum membrane. The protein resides in the golgi apparatus membrane. It is found in the cell projection. The protein localises to the neuron projection. In terms of biological role, postsynaptic adhesion molecule involved in vesicle trafficking; required for branching of peripheral but not central axons of sensory neurons. Promotes synapse development by acting as a cell adhesion molecule at the postsynaptic membrane, which associates with presynaptic neurexins. This Danio rerio (Zebrafish) protein is Calsyntenin-1.